Consider the following 546-residue polypeptide: Chaperonin GroEL (546 aa).

Residues 30 to 33 (TLGP), Lys51, 87 to 91 (DGTTT), Gly415, 479 to 481 (NAA), and Asp495 each bind ATP.

Belongs to the chaperonin (HSP60) family. In terms of assembly, forms a cylinder of 14 subunits composed of two heptameric rings stacked back-to-back. Interacts with the co-chaperonin GroES.

It is found in the cytoplasm. The catalysed reaction is ATP + H2O + a folded polypeptide = ADP + phosphate + an unfolded polypeptide.. Functionally, together with its co-chaperonin GroES, plays an essential role in assisting protein folding. The GroEL-GroES system forms a nano-cage that allows encapsulation of the non-native substrate proteins and provides a physical environment optimized to promote and accelerate protein folding. The sequence is that of Chaperonin GroEL from Pseudomonas putida (strain W619).